Reading from the N-terminus, the 261-residue chain is 5'-nucleotidase SurE (261 aa).

Asp-10, Asp-11, Ser-41, and Asn-96 together coordinate a divalent metal cation.

It belongs to the SurE nucleotidase family. The cofactor is a divalent metal cation.

The protein localises to the cytoplasm. The enzyme catalyses a ribonucleoside 5'-phosphate + H2O = a ribonucleoside + phosphate. Nucleotidase that shows phosphatase activity on nucleoside 5'-monophosphates. The sequence is that of 5'-nucleotidase SurE from Methanococcoides burtonii (strain DSM 6242 / NBRC 107633 / OCM 468 / ACE-M).